The sequence spans 548 residues: WEB family protein At1g12150 (548 aa).

Positions lysine 71–asparagine 544 form a coiled coil. The span at valine 430–glutamate 448 shows a compositional bias: basic and acidic residues. Residues valine 430–isoleucine 455 form a disordered region.

It belongs to the WEB family.

In Arabidopsis thaliana (Mouse-ear cress), this protein is WEB family protein At1g12150.